The chain runs to 413 residues: Glucose-1-phosphate adenylyltransferase (413 aa).

Residues Y102, G167, 182 to 183 (EK), and S200 each bind alpha-D-glucose 1-phosphate.

This sequence belongs to the bacterial/plant glucose-1-phosphate adenylyltransferase family. In terms of assembly, homotetramer.

The catalysed reaction is alpha-D-glucose 1-phosphate + ATP + H(+) = ADP-alpha-D-glucose + diphosphate. The protein operates within glycan biosynthesis; glycogen biosynthesis. Its function is as follows. Involved in the biosynthesis of ADP-glucose, a building block required for the elongation reactions to produce glycogen. Catalyzes the reaction between ATP and alpha-D-glucose 1-phosphate (G1P) to produce pyrophosphate and ADP-Glc. This Deinococcus deserti (strain DSM 17065 / CIP 109153 / LMG 22923 / VCD115) protein is Glucose-1-phosphate adenylyltransferase.